A 162-amino-acid polypeptide reads, in one-letter code: UPF0114 protein Psyr_4257 (162 aa).

4 helical membrane passes run 15–35 (LLAPIYFGLSLGLLALCLKFF), 53–73 (LILVLLSLIDMALVGGLLVMV), 109–129 (VAASIVAISSIHLLRVFMDAT), and 136–156 (LMWYVIIHMTFVISAFAMGYL).

This sequence belongs to the UPF0114 family.

The protein resides in the cell membrane. The sequence is that of UPF0114 protein Psyr_4257 from Pseudomonas syringae pv. syringae (strain B728a).